The following is a 208-amino-acid chain: Adenylyl-sulfate kinase (208 aa).

Residue 31–38 (GLSGSGKS) participates in ATP binding. The active-site Phosphoserine intermediate is the serine 105.

It belongs to the APS kinase family.

The catalysed reaction is adenosine 5'-phosphosulfate + ATP = 3'-phosphoadenylyl sulfate + ADP + H(+). Its pathway is sulfur metabolism; hydrogen sulfide biosynthesis; sulfite from sulfate: step 2/3. Catalyzes the synthesis of activated sulfate. The sequence is that of Adenylyl-sulfate kinase from Pseudomonas entomophila (strain L48).